The primary structure comprises 360 residues: Chorismate synthase (360 aa).

The NADP(+) site is built by arginine 48 and arginine 54. FMN-binding positions include 125-127 (RSS), 246-247 (NA), glycine 286, 301-305 (KPTSS), and arginine 327.

It belongs to the chorismate synthase family. As to quaternary structure, homotetramer. The cofactor is FMNH2.

The enzyme catalyses 5-O-(1-carboxyvinyl)-3-phosphoshikimate = chorismate + phosphate. The protein operates within metabolic intermediate biosynthesis; chorismate biosynthesis; chorismate from D-erythrose 4-phosphate and phosphoenolpyruvate: step 7/7. Functionally, catalyzes the anti-1,4-elimination of the C-3 phosphate and the C-6 proR hydrogen from 5-enolpyruvylshikimate-3-phosphate (EPSP) to yield chorismate, which is the branch point compound that serves as the starting substrate for the three terminal pathways of aromatic amino acid biosynthesis. This reaction introduces a second double bond into the aromatic ring system. The protein is Chorismate synthase of Actinobacillus pleuropneumoniae serotype 5b (strain L20).